A 241-amino-acid polypeptide reads, in one-letter code: Thymidylate kinase (241 aa).

Residue 17-24 (GGEGAGKT) coordinates ATP.

The protein belongs to the thymidylate kinase family.

It catalyses the reaction dTMP + ATP = dTDP + ADP. Its function is as follows. Phosphorylation of dTMP to form dTDP in both de novo and salvage pathways of dTTP synthesis. This is Thymidylate kinase from Thermosynechococcus vestitus (strain NIES-2133 / IAM M-273 / BP-1).